A 206-amino-acid chain; its full sequence is UPF0301 protein Msil_1255 (206 aa).

The protein belongs to the UPF0301 (AlgH) family.

The sequence is that of UPF0301 protein Msil_1255 from Methylocella silvestris (strain DSM 15510 / CIP 108128 / LMG 27833 / NCIMB 13906 / BL2).